Consider the following 316-residue polypeptide: Conjugated bile acid hydrolase (316 aa).

Residue cysteine 2 is the Nucleophile of the active site. Residues cysteine 2 and arginine 18 each contribute to the deoxycholate site. Residue asparagine 81 coordinates taurine.

It belongs to the peptidase C59 family.

It carries out the reaction cholate + taurine = taurocholate + H2O. The enzyme catalyses taurochenodeoxycholate + H2O = chenodeoxycholate + taurine. The catalysed reaction is taurodeoxycholate + H2O = deoxycholate + taurine. It catalyses the reaction glycocholate + H2O = cholate + glycine. It carries out the reaction glycodeoxycholate + H2O = deoxycholate + glycine. It functions in the pathway lipid metabolism; bile acid biosynthesis. Its function is as follows. Bile salt hydrolase that catalyzes the deconjugation of glycine- and taurine-linked bile salts, which occurs naturally in the intestines of humans, releasing amino acid residues and deconjugated bile salts (bile acids). Can hydrolyze the amide bond in the bile salts taurocholate (TCA), taurodeoxycholate (TDCA), taurochenodeoxycholate (TCDCA), glycocholate (GCA) and glycodeoxycholate (GDCA). Shows highest activity toward the taurine-conjugated bile salts TCA and TCDCA. The activity toward the other three substrates (TDCA, GCA and GDCA) is relatively low. This enzyme likely contributes to bile salt resistance of the strain and may be associated with survival capability of strain JCM1131 within the human intestine by bile detoxification. In Lactobacillus gasseri (strain ATCC 33323 / DSM 20243 / BCRC 14619 / CIP 102991 / JCM 1131 / KCTC 3163 / NCIMB 11718 / NCTC 13722 / AM63), this protein is Conjugated bile acid hydrolase.